Here is a 532-residue protein sequence, read N- to C-terminus: Collagen alpha-1(XXIII) chain (532 aa).

Over 1–23 the chain is Cytoplasmic; that stretch reads MGAGERAAGGGGAQDPGAGCGSR. Residues 24 to 45 form a helical; Signal-anchor for type II membrane protein membrane-spanning segment; sequence ALSALCLLLSVGSAAACLLLGA. Residues 46 to 532 lie on the Extracellular side of the membrane; the sequence is QAAALHGRVA…GLPVPGCWHK (487 aa). 2 disordered regions span residues 102–296 and 308–532; these read PSEC…GEQG and LDAL…CWHK. Collagen-like domains are found at residues 108–166, 173–232, 240–298, and 313–372; these read PPGP…RGAQ, GPPG…PGKK, QPGL…QGDT, and GPPG…MGLS. The span at 129–145 shows a compositional bias: low complexity; sequence QSGRDGYPGPLGLDGKP. Pro residues predominate over residues 174 to 184; sequence PPGPPGPPGAR. Residues 196–207 show a composition bias toward low complexity; that stretch reads RGAQGPAGPRGE. A compositionally biased stretch (pro residues) spans 314-326; the sequence is PPGPQGAPGPPGI. Basic and acidic residues-rich tracts occupy residues 342-354 and 380-393; these read DGEK…KGDP and PKGE…DHLQ. The segment covering 403–414 has biased composition (pro residues); the sequence is PGPPGPPGPPGP. 2 Collagen-like domains span residues 404–452 and 455–514; these read GPPG…GPPG and GLPG…PGLD. 2 stretches are compositionally biased toward basic and acidic residues: residues 427-441 and 478-495; these read DGAK…ERGP and RGEK…ERGV.

In terms of assembly, homotrimer. Undergoes proteolytic cleavage by furin protease to yield a 60 kDa soluble form that forms a homotrimer and exhibits a low affinity interaction with heparin.

It is found in the cell membrane. This Mus musculus (Mouse) protein is Collagen alpha-1(XXIII) chain (Col23a1).